Reading from the N-terminus, the 204-residue chain is Bcl-2-like protein 10 (204 aa).

The BH1 signature appears at 86 to 105; it reads LSDSPGPTWGRVVTLVTFAG. The interval 118–133 is required for Ca(2+) binding; that stretch reads WKKWGFQPRLKEQEGD. Residues K119, K120, and K128 each participate in a glycyl lysine isopeptide (Lys-Gly) (interchain with G-Cter in ubiquitin) cross-link. The BH2 signature appears at 156–167; it reads WLQAQGGWDGFC. A helical membrane pass occupies residues 183–200; the sequence is LVQAFLSCLLTTAFIYLW.

It belongs to the Bcl-2 family. As to quaternary structure, interacts with BAX. Interacts with BCL2 and BCL2L1/BCLX. Interacts with APAF1. Interacts with ITPR1, ITPR2 and ITPR3; the interaction with ITPR1 is increased in the presence of AHCLY1. Interacts with AHCYL1. Interacts with HIP1R (via ENTH and I/LWEQ domains). Interacts with CASP9. Interacts with BCL2L11/BIM. Interacts with BIK. Interacts with UBQLN4. Interacts with NME2/NM23-H2. Interacts with PMAIP1/NOXA. Interacts with TPX2. Interacts with UBQLN1; in the cytoplasm. Interacts (via BH1 domain) with BECN1. Ca(2+) is required as a cofactor. Monoubiquitinated by UBQLN1; results in stabilization of BCL2L10 protein abundance and in relocalization from mitochondria to cytoplasm. In terms of tissue distribution, widely expressed in adult tissues. Preferentially expressed in lung, liver and kidney.

It localises to the mitochondrion. Its subcellular location is the nucleus membrane. It is found in the endoplasmic reticulum. The protein resides in the cytoplasm. The protein localises to the cytoskeleton. It localises to the spindle. Functionally, promotes cell survival by suppressing apoptosis induced by BAX but not BAK. Increases binding of AHCYL1/IRBIT to ITPR1. Reduces ITPR1-mediated calcium release from the endoplasmic reticulum cooperatively with AHCYL1/IRBIT under normal cellular conditions. Under apoptotic stress conditions, dissociates from ITPR1 and is displaced from mitochondria-associated endoplasmic reticulum membranes, leading to increased Ca(2+) transfer to mitochondria which promotes apoptosis. Required for the correct formation of the microtubule organizing center during oocyte cell division, potentially via regulation of protein abundance and localization of other microtubule organizing center components such as AURKA and TPX2. This is Bcl-2-like protein 10 from Homo sapiens (Human).